The following is a 130-amino-acid chain: Small ribosomal subunit protein uS8 (130 aa).

The protein belongs to the universal ribosomal protein uS8 family. In terms of assembly, part of the 30S ribosomal subunit. Contacts proteins S5 and S12.

Functionally, one of the primary rRNA binding proteins, it binds directly to 16S rRNA central domain where it helps coordinate assembly of the platform of the 30S subunit. The protein is Small ribosomal subunit protein uS8 of Aliivibrio fischeri (strain ATCC 700601 / ES114) (Vibrio fischeri).